Here is a 638-residue protein sequence, read N- to C-terminus: 3D-(3,5/4)-trihydroxycyclohexane-1,2-dione hydrolase (638 aa).

Glu67 is a thiamine diphosphate binding site. Positions 442 to 523 (SLPGDLQRLW…INIMLFDNSG (82 aa)) are thiamine pyrophosphate binding. Mg(2+)-binding residues include Asp494 and Asn521.

This sequence belongs to the TPP enzyme family. Requires Mg(2+) as cofactor. Thiamine diphosphate serves as cofactor.

The enzyme catalyses 3D-3,5/4-trihydroxycyclohexane-1,2-dione + H2O = 5-deoxy-D-glucuronate + H(+). It participates in polyol metabolism; myo-inositol degradation into acetyl-CoA; acetyl-CoA from myo-inositol: step 3/7. In terms of biological role, involved in the cleavage of the C1-C2 bond of 3D-(3,5/4)-trihydroxycyclohexane-1,2-dione (THcHDO) to yield 5-deoxy-glucuronate (5DG). The protein is 3D-(3,5/4)-trihydroxycyclohexane-1,2-dione hydrolase of Listeria innocua serovar 6a (strain ATCC BAA-680 / CLIP 11262).